Consider the following 729-residue polypeptide: Polyribonucleotide nucleotidyltransferase (729 aa).

Mg(2+) contacts are provided by D510 and D516. Positions 576–635 (PRVISVKIPVDKIGEVIGPKGKMINQIQADSGAEITVEDDGTIYIGAADGTSAETARSAI) constitute a KH domain. The 73-residue stretch at 647–719 (GERYLGTIVK…ARGKISLSPS (73 aa)) folds into the S1 motif domain.

Belongs to the polyribonucleotide nucleotidyltransferase family. Mg(2+) serves as cofactor.

It localises to the cytoplasm. The enzyme catalyses RNA(n+1) + phosphate = RNA(n) + a ribonucleoside 5'-diphosphate. Functionally, involved in mRNA degradation. Catalyzes the phosphorolysis of single-stranded polyribonucleotides processively in the 3'- to 5'-direction. This is Polyribonucleotide nucleotidyltransferase from Frankia alni (strain DSM 45986 / CECT 9034 / ACN14a).